A 270-amino-acid polypeptide reads, in one-letter code: Chymotrypsin-like elastase family member 3B (270 aa).

Residues 1–15 (MMLRLLSSLLLVAVA) constitute a signal peptide (or 16). Positions 16 to 28 (SGYGPPSSRPSSR) are cleaved as a propeptide — activation peptide. The Peptidase S1 domain occupies 29–268 (VVNGEDAVPY…FIDWIEETIA (240 aa)). C58 and C74 are oxidised to a cystine. H73 acts as the Charge relay system in catalysis. N114 carries N-linked (GlcNAc...) asparagine glycosylation. C117 and C120 are oxidised to a cystine. The Charge relay system role is filled by D123. Cystine bridges form between C157–C223, C188–C204, and C213–C244. S217 serves as the catalytic Charge relay system.

This sequence belongs to the peptidase S1 family. Elastase subfamily. As to expression, pancreas. Not detectable in keratinocytes.

It carries out the reaction Preferential cleavage: Ala-|-Xaa. Does not hydrolyze elastin.. Functionally, efficient protease with alanine specificity but only little elastolytic activity. The chain is Chymotrypsin-like elastase family member 3B (CELA3B) from Homo sapiens (Human).